Consider the following 334-residue polypeptide: Glycerol-3-phosphate dehydrogenase [NAD(P)+] (334 aa).

NADPH contacts are provided by Trp-13, Arg-33, and Lys-106. 3 residues coordinate sn-glycerol 3-phosphate: Lys-106, Gly-137, and Ser-139. Ala-141 provides a ligand contact to NADPH. The sn-glycerol 3-phosphate site is built by Lys-192, Asp-245, Ser-255, Arg-256, and Asn-257. Lys-192 serves as the catalytic Proton acceptor. Arg-256 serves as a coordination point for NADPH. 2 residues coordinate NADPH: Val-280 and Glu-282.

The protein belongs to the NAD-dependent glycerol-3-phosphate dehydrogenase family.

The protein resides in the cytoplasm. It catalyses the reaction sn-glycerol 3-phosphate + NAD(+) = dihydroxyacetone phosphate + NADH + H(+). It carries out the reaction sn-glycerol 3-phosphate + NADP(+) = dihydroxyacetone phosphate + NADPH + H(+). It functions in the pathway membrane lipid metabolism; glycerophospholipid metabolism. In terms of biological role, catalyzes the reduction of the glycolytic intermediate dihydroxyacetone phosphate (DHAP) to sn-glycerol 3-phosphate (G3P), the key precursor for phospholipid synthesis. The protein is Glycerol-3-phosphate dehydrogenase [NAD(P)+] of Chlamydia muridarum (strain MoPn / Nigg).